Reading from the N-terminus, the 524-residue chain is Putative mediator of RNA polymerase II transcription subunit 8 (524 aa).

2 coiled-coil regions span residues 117 to 146 (LKLH…SKHK) and 175 to 211 (NAQQ…QQQQ). Disordered stretches follow at residues 312–340 (VASP…QPSI), 356–379 (LPNT…IGGG), and 430–451 (QQNQ…IQHL). Polar residues predominate over residues 314–333 (SPQQQVTSKQVPIQSTNKPL). Positions 356–374 (LPNTTSPPVNNNNQSPINS) are enriched in low complexity. Positions 398 to 478 (IQQQIQLQQQ…LQQQFQQQQL (81 aa)) form a coiled coil.

Belongs to the Mediator complex subunit 8 family. As to quaternary structure, component of the Mediator complex. May be part of a multisubunit E3 ubiquitin-protein ligase complex.

It localises to the nucleus. It participates in protein modification; protein ubiquitination. Its function is as follows. Component of the Mediator complex, a coactivator involved in the regulated transcription of nearly all RNA polymerase II-dependent genes. Mediator functions as a bridge to convey information from gene-specific regulatory proteins to the basal RNA polymerase II transcription machinery. Mediator is recruited to promoters by direct interactions with regulatory proteins and serves as a scaffold for the assembly of a functional preinitiation complex with RNA polymerase II and the general transcription factors. May play a role as a target recruitment subunit in E3 ubiquitin-protein ligase complexes and thus in ubiquitination and subsequent proteasomal degradation of target proteins. The protein is Putative mediator of RNA polymerase II transcription subunit 8 (med8) of Dictyostelium discoideum (Social amoeba).